The sequence spans 122 residues: Small ribosomal subunit protein uS13 (122 aa).

Residues 99–122 (RGQRTHTNARTRKGPAKAIAGKKK) form a disordered region.

Belongs to the universal ribosomal protein uS13 family. As to quaternary structure, part of the 30S ribosomal subunit. Forms a loose heterodimer with protein S19. Forms two bridges to the 50S subunit in the 70S ribosome.

Located at the top of the head of the 30S subunit, it contacts several helices of the 16S rRNA. In the 70S ribosome it contacts the 23S rRNA (bridge B1a) and protein L5 of the 50S subunit (bridge B1b), connecting the 2 subunits; these bridges are implicated in subunit movement. Contacts the tRNAs in the A and P-sites. The protein is Small ribosomal subunit protein uS13 of Rhodopseudomonas palustris (strain BisA53).